The sequence spans 148 residues: Hemoglobin subunit alpha (148 aa).

Serine 1 carries the N-acetylserine modification. In terms of domain architecture, Globin spans 8 to 148 (DYSAADRAEL…VCHELSSRYR (141 aa)). Residue histidine 66 coordinates O2. Histidine 95 is a binding site for heme b.

It belongs to the globin family. Heterotetramer of two alpha chains and two beta chains. Red blood cells.

Its function is as follows. Involved in oxygen transport from the lung to the various peripheral tissues. This is Hemoglobin subunit alpha (HBA) from Heterodontus portusjacksoni (Port Jackson shark).